Here is a 141-residue protein sequence, read N- to C-terminus: Hemoglobin subunit beta-C (141 aa).

Residues 1 to 141 (PNKALITGFW…VASALAHRYH (141 aa)) enclose the Globin domain. Heme b contacts are provided by H58 and H87.

It belongs to the globin family. In terms of assembly, heterotetramer of two alpha chains and two beta chains. In terms of tissue distribution, red blood cells.

Its function is as follows. Involved in oxygen transport from the lung to the various peripheral tissues. The sequence is that of Hemoglobin subunit beta-C from Ammotragus lervia (Barbary sheep).